The primary structure comprises 266 residues: Undecaprenyl-diphosphatase (266 aa).

A run of 7 helical transmembrane segments spans residues 39–59, 86–106, 112–132, 147–167, 189–209, 216–236, and 246–266; these read PGAS…AYYF, SIFI…IFIP, VLRS…FMYL, NFSN…PGVS, FSFL…FVSS, LGFF…LLAI, and NGLK…LLNL.

The protein belongs to the UppP family.

The protein localises to the cell inner membrane. It catalyses the reaction di-trans,octa-cis-undecaprenyl diphosphate + H2O = di-trans,octa-cis-undecaprenyl phosphate + phosphate + H(+). In terms of biological role, catalyzes the dephosphorylation of undecaprenyl diphosphate (UPP). Confers resistance to bacitracin. In Prochlorococcus marinus (strain MIT 9301), this protein is Undecaprenyl-diphosphatase.